The sequence spans 318 residues: Galactose-1-phosphate uridylyltransferase (318 aa).

The Zn(2+) site is built by C32, C35, and H90. Residue N130 participates in UDP-alpha-D-glucose binding. H141 is a binding site for Zn(2+). H143 serves as the catalytic Tele-UMP-histidine intermediate. Q145 contributes to the UDP-alpha-D-glucose binding site.

It belongs to the galactose-1-phosphate uridylyltransferase type 1 family. It depends on Zn(2+) as a cofactor.

It carries out the reaction alpha-D-galactose 1-phosphate + UDP-alpha-D-glucose = alpha-D-glucose 1-phosphate + UDP-alpha-D-galactose. It functions in the pathway carbohydrate metabolism; galactose metabolism. The chain is Galactose-1-phosphate uridylyltransferase (galT) from Thermotoga maritima (strain ATCC 43589 / DSM 3109 / JCM 10099 / NBRC 100826 / MSB8).